A 217-amino-acid chain; its full sequence is Ran-binding protein 1 homolog b (217 aa).

2 disordered regions span residues 1–32 and 160–217; these read MASISNEPERENRDEEETGANEDEDTGAQVAP and ESEE…VPSA. Ala2 bears the N-acetylalanine mark. Residues 14-26 are compositionally biased toward acidic residues; that stretch reads DEEETGANEDEDT. The region spanning 29 to 164 is the RanBD1 domain; the sequence is QVAPIVRLEE…FKEVAESEEE (136 aa). Residues 181–217 are compositionally biased toward basic and acidic residues; the sequence is LTVEEKESEKKPVEKAEENKKSEAVEEKKTEESVPSA.

Interacts with the GTP-bound form of RAN1, RAN2 and RAN3.

The protein localises to the nucleus. Its subcellular location is the nuclear pore complex. This is Ran-binding protein 1 homolog b (RANBP1B) from Arabidopsis thaliana (Mouse-ear cress).